Consider the following 214-residue polypeptide: Cytochrome c biogenesis ATP-binding export protein CcmA (214 aa).

In terms of domain architecture, ABC transporter spans 16–212 (LRVSGLSLSR…PDAKRIDLGA (197 aa)). Residue 48–55 (GPNGTGKT) participates in ATP binding.

This sequence belongs to the ABC transporter superfamily. CcmA exporter (TC 3.A.1.107) family. As to quaternary structure, the complex is composed of two ATP-binding proteins (CcmA) and two transmembrane proteins (CcmB).

It localises to the cell inner membrane. The catalysed reaction is heme b(in) + ATP + H2O = heme b(out) + ADP + phosphate + H(+). Its function is as follows. Part of the ABC transporter complex CcmAB involved in the biogenesis of c-type cytochromes; once thought to export heme, this seems not to be the case, but its exact role is uncertain. Responsible for energy coupling to the transport system. The sequence is that of Cytochrome c biogenesis ATP-binding export protein CcmA from Maricaulis maris (strain MCS10) (Caulobacter maris).